The chain runs to 377 residues: Beta sliding clamp (377 aa).

It belongs to the beta sliding clamp family. In terms of assembly, forms a ring-shaped head-to-tail homodimer around DNA which binds and tethers DNA polymerases and other proteins to the DNA. The DNA replisome complex has a single clamp-loading complex (3 tau and 1 each of delta, delta', psi and chi subunits) which binds 3 Pol III cores (1 core on the leading strand and 2 on the lagging strand) each with a beta sliding clamp dimer. Additional proteins in the replisome are other copies of gamma, psi and chi, Ssb, DNA helicase and RNA primase.

The protein localises to the cytoplasm. Functionally, confers DNA tethering and processivity to DNA polymerases and other proteins. Acts as a clamp, forming a ring around DNA (a reaction catalyzed by the clamp-loading complex) which diffuses in an ATP-independent manner freely and bidirectionally along dsDNA. Initially characterized for its ability to contact the catalytic subunit of DNA polymerase III (Pol III), a complex, multichain enzyme responsible for most of the replicative synthesis in bacteria; Pol III exhibits 3'-5' exonuclease proofreading activity. The beta chain is required for initiation of replication as well as for processivity of DNA replication. In Staphylococcus aureus (strain COL), this protein is Beta sliding clamp (dnaN).